The chain runs to 315 residues: tRNA-cytidine(32) 2-sulfurtransferase (315 aa).

A PP-loop motif motif is present at residues 54-59; that stretch reads SGGKDS. The [4Fe-4S] cluster site is built by Cys129, Cys132, and Cys220.

It belongs to the TtcA family. In terms of assembly, homodimer. The cofactor is Mg(2+). [4Fe-4S] cluster is required as a cofactor.

The protein localises to the cytoplasm. The catalysed reaction is cytidine(32) in tRNA + S-sulfanyl-L-cysteinyl-[cysteine desulfurase] + AH2 + ATP = 2-thiocytidine(32) in tRNA + L-cysteinyl-[cysteine desulfurase] + A + AMP + diphosphate + H(+). The protein operates within tRNA modification. Functionally, catalyzes the ATP-dependent 2-thiolation of cytidine in position 32 of tRNA, to form 2-thiocytidine (s(2)C32). The sulfur atoms are provided by the cysteine/cysteine desulfurase (IscS) system. This Bordetella avium (strain 197N) protein is tRNA-cytidine(32) 2-sulfurtransferase.